We begin with the raw amino-acid sequence, 593 residues long: Dihydroxy-acid dehydratase (593 aa).

Over residues 1 to 17 the composition is skewed to acidic residues; it reads MSQQTEPDDDAALDGDE. A disordered region spans residues 1 to 40; the sequence is MSQQTEPDDDAALDGDEPGAYGKDERLRSREVTEGPERAP. Basic and acidic residues predominate over residues 22–40; it reads GKDERLRSREVTEGPERAP. Cysteine 72 contributes to the [2Fe-2S] cluster binding site. Aspartate 104 provides a ligand contact to Mg(2+). Cysteine 145 is a binding site for [2Fe-2S] cluster. Residues aspartate 146 and lysine 147 each coordinate Mg(2+). Position 147 is an N6-carboxylysine (lysine 147). Residue cysteine 217 participates in [2Fe-2S] cluster binding. Glutamate 475 is a binding site for Mg(2+). The active-site Proton acceptor is the serine 501.

The protein belongs to the IlvD/Edd family. As to quaternary structure, homodimer. [2Fe-2S] cluster is required as a cofactor. Requires Mg(2+) as cofactor.

The catalysed reaction is (2R)-2,3-dihydroxy-3-methylbutanoate = 3-methyl-2-oxobutanoate + H2O. It carries out the reaction (2R,3R)-2,3-dihydroxy-3-methylpentanoate = (S)-3-methyl-2-oxopentanoate + H2O. It functions in the pathway amino-acid biosynthesis; L-isoleucine biosynthesis; L-isoleucine from 2-oxobutanoate: step 3/4. It participates in amino-acid biosynthesis; L-valine biosynthesis; L-valine from pyruvate: step 3/4. In terms of biological role, functions in the biosynthesis of branched-chain amino acids. Catalyzes the dehydration of (2R,3R)-2,3-dihydroxy-3-methylpentanoate (2,3-dihydroxy-3-methylvalerate) into 2-oxo-3-methylpentanoate (2-oxo-3-methylvalerate) and of (2R)-2,3-dihydroxy-3-methylbutanoate (2,3-dihydroxyisovalerate) into 2-oxo-3-methylbutanoate (2-oxoisovalerate), the penultimate precursor to L-isoleucine and L-valine, respectively. This chain is Dihydroxy-acid dehydratase, found in Natronomonas pharaonis (strain ATCC 35678 / DSM 2160 / CIP 103997 / JCM 8858 / NBRC 14720 / NCIMB 2260 / Gabara) (Halobacterium pharaonis).